We begin with the raw amino-acid sequence, 459 residues long: Glycosyl hydrolase family 109 protein (459 aa).

Residues 1–31 (MHNIHRRNFLKAAGAATAGLVTANIALSAYA) constitute a signal peptide (tat-type signal). NAD(+) contacts are provided by residues 64–65 (ER), aspartate 86, 135–138 (WEWH), 155–156 (EV), and asparagine 184. Substrate contacts are provided by residues tyrosine 213, arginine 232, 244 to 247 (YPTH), and tyrosine 326. NAD(+) is bound at residue tyrosine 244.

It belongs to the Gfo/Idh/MocA family. Glycosyl hydrolase 109 subfamily. It depends on NAD(+) as a cofactor. In terms of processing, predicted to be exported by the Tat system. The position of the signal peptide cleavage has not been experimentally proven.

Glycosidase. This Shewanella baltica (strain OS185) protein is Glycosyl hydrolase family 109 protein.